The sequence spans 293 residues: Formamidopyrimidine-DNA glycosylase (293 aa).

Pro2 (schiff-base intermediate with DNA) is an active-site residue. The active-site Proton donor is the Glu3. The active-site Proton donor; for beta-elimination activity is Lys58. DNA is bound by residues His104, Arg123, and Arg166. Residues 257–293 (KVYDREGEPCPTLRCKGHVQRIVQAGRSTFFCATCQR) form an FPG-type zinc finger. Residue Arg283 is the Proton donor; for delta-elimination activity of the active site.

It belongs to the FPG family. In terms of assembly, monomer. Zn(2+) serves as cofactor.

The enzyme catalyses Hydrolysis of DNA containing ring-opened 7-methylguanine residues, releasing 2,6-diamino-4-hydroxy-5-(N-methyl)formamidopyrimidine.. It catalyses the reaction 2'-deoxyribonucleotide-(2'-deoxyribose 5'-phosphate)-2'-deoxyribonucleotide-DNA = a 3'-end 2'-deoxyribonucleotide-(2,3-dehydro-2,3-deoxyribose 5'-phosphate)-DNA + a 5'-end 5'-phospho-2'-deoxyribonucleoside-DNA + H(+). Involved in base excision repair of DNA damaged by oxidation or by mutagenic agents. Acts as a DNA glycosylase that recognizes and removes damaged bases. Has a preference for oxidized purines, such as 7,8-dihydro-8-oxoguanine (8-oxoG). Has AP (apurinic/apyrimidinic) lyase activity and introduces nicks in the DNA strand. Cleaves the DNA backbone by beta-delta elimination to generate a single-strand break at the site of the removed base with both 3'- and 5'-phosphates. The protein is Formamidopyrimidine-DNA glycosylase of Azorhizobium caulinodans (strain ATCC 43989 / DSM 5975 / JCM 20966 / LMG 6465 / NBRC 14845 / NCIMB 13405 / ORS 571).